We begin with the raw amino-acid sequence, 52 residues long: Phospholamban (52 aa).

Methionine 1 bears the N-acetylmethionine mark. Topologically, residues 1–31 (MDKVQYLTRSAIRRASTIEMPQQARQNLQNL) are cytoplasmic. Serine 16 carries the phosphoserine; by PKA and DMPK modification. A Phosphothreonine; by CaMK2 modification is found at threonine 17. Residues 32–52 (FINFCLILICLLLICIIVMLL) form a helical membrane-spanning segment. Cysteine 36 carries the S-palmitoyl cysteine lipid modification.

This sequence belongs to the phospholamban family. As to quaternary structure, homopentamer. Can also form heterooligomers with other sarcoplasmic/endoplasmic reticulum calcium ATPase (SERCA) regulators ARLN, ERLN, SLN and STRIT1/DWORF. Monomer. Interacts with HAX1. Interacts as a monomer with ATP2A2; the interaction decreases ATP2A2 Ca(2+) affinity. Interacts with VMP1; VMP1 competes with PLN and SLN to prevent them from forming an inhibitory complex with ATP2A2. Interacts with S100A1 in a Ca(2+)-dependent manner. In terms of processing, phosphorylation by DMPK may stimulate sarcoplasmic reticulum calcium uptake in cardiomyocytes. Phosphorylation by PKA abolishes the inhibition of ATP2A2-mediated calcium uptake. Phosphorylated at Thr-17 by CaMK2, and in response to beta-adrenergic stimulation. Post-translationally, palmitoylated by ZDHHC16, promoting formation of the homopentamer. In elongated spermatids, proteolytically cleaved by SPPL2C which modulates intracellular Ca(2+) homeostasis. In terms of tissue distribution, heart.

Its subcellular location is the endoplasmic reticulum membrane. The protein resides in the sarcoplasmic reticulum membrane. The protein localises to the mitochondrion membrane. It is found in the membrane. Its function is as follows. Reversibly inhibits the activity of ATP2A2/SERCA2 in cardiac sarcoplasmic reticulum by decreasing the apparent affinity of the ATPase for Ca(2+). Binds preferentially to the ATP-bound E1 conformational form of ATP2A2 which predominates at low Ca(2+) concentrations during the diastolic phase of the cardiac cycle. Inhibits ATP2A2 Ca(2+) affinity by disrupting its allosteric activation by ATP. Modulates the contractility of the heart muscle in response to physiological stimuli via its effects on ATP2A2. Modulates calcium re-uptake during muscle relaxation and plays an important role in calcium homeostasis in the heart muscle. The degree of ATP2A2 inhibition depends on the oligomeric state of PLN. ATP2A2 inhibition is alleviated by PLN phosphorylation. Also inhibits the activity of ATP2A3/SERCA3. Controls intracellular Ca(2+) levels in elongated spermatids and may play a role in germ cell differentiation. In the thalamic reticular nucleus of the brain, plays a role in the regulation of sleep patterns and executive functioning. The chain is Phospholamban from Canis lupus familiaris (Dog).